The following is a 156-amino-acid chain: SsrA-binding protein (156 aa).

This sequence belongs to the SmpB family.

Its subcellular location is the cytoplasm. Its function is as follows. Required for rescue of stalled ribosomes mediated by trans-translation. Binds to transfer-messenger RNA (tmRNA), required for stable association of tmRNA with ribosomes. tmRNA and SmpB together mimic tRNA shape, replacing the anticodon stem-loop with SmpB. tmRNA is encoded by the ssrA gene; the 2 termini fold to resemble tRNA(Ala) and it encodes a 'tag peptide', a short internal open reading frame. During trans-translation Ala-aminoacylated tmRNA acts like a tRNA, entering the A-site of stalled ribosomes, displacing the stalled mRNA. The ribosome then switches to translate the ORF on the tmRNA; the nascent peptide is terminated with the 'tag peptide' encoded by the tmRNA and targeted for degradation. The ribosome is freed to recommence translation, which seems to be the essential function of trans-translation. The chain is SsrA-binding protein from Clostridium perfringens (strain 13 / Type A).